The chain runs to 360 residues: NAD(P)H-quinone oxidoreductase subunit 1, chloroplastic (360 aa).

Helical transmembrane passes span 29-49 (WIPL…LVIV), 96-116 (IWLF…AYLV), 128-148 (ISLG…GLLM), 166-186 (AAQA…ICLL), 204-224 (ILGW…IAAL), 255-277 (GLFY…ILYL), 297-317 (IFAA…FIFL), and 333-353 (LLDL…LLTA).

The protein belongs to the complex I subunit 1 family. In terms of assembly, NDH is composed of at least 16 different subunits, 5 of which are encoded in the nucleus.

It is found in the plastid. The protein resides in the chloroplast thylakoid membrane. It catalyses the reaction a plastoquinone + NADH + (n+1) H(+)(in) = a plastoquinol + NAD(+) + n H(+)(out). The catalysed reaction is a plastoquinone + NADPH + (n+1) H(+)(in) = a plastoquinol + NADP(+) + n H(+)(out). In terms of biological role, NDH shuttles electrons from NAD(P)H:plastoquinone, via FMN and iron-sulfur (Fe-S) centers, to quinones in the photosynthetic chain and possibly in a chloroplast respiratory chain. The immediate electron acceptor for the enzyme in this species is believed to be plastoquinone. Couples the redox reaction to proton translocation, and thus conserves the redox energy in a proton gradient. The sequence is that of NAD(P)H-quinone oxidoreductase subunit 1, chloroplastic from Chlorokybus atmophyticus (Soil alga).